Reading from the N-terminus, the 364-residue chain is 1-aminocyclopropane-1-carboxylate oxidase homolog 11 (364 aa).

Positions 213–312 (KSLLMICHYY…RISVASFFSS (100 aa)) constitute a Fe2OG dioxygenase domain. Fe cation contacts are provided by histidine 237, aspartate 239, and histidine 293. A 2-oxoglutarate-binding site is contributed by arginine 303.

Belongs to the iron/ascorbate-dependent oxidoreductase family. Requires Fe(2+) as cofactor.

This Arabidopsis thaliana (Mouse-ear cress) protein is 1-aminocyclopropane-1-carboxylate oxidase homolog 11.